The chain runs to 447 residues: Glutamyl-tRNA(Gln) amidotransferase subunit A (447 aa).

Active-site charge relay system residues include K51 and S126. The Acyl-ester intermediate role is filled by S150.

This sequence belongs to the amidase family. GatA subfamily. In terms of assembly, heterotrimer of A, B and C subunits.

It catalyses the reaction L-glutamyl-tRNA(Gln) + L-glutamine + ATP + H2O = L-glutaminyl-tRNA(Gln) + L-glutamate + ADP + phosphate + H(+). In terms of biological role, allows the formation of correctly charged Gln-tRNA(Gln) through the transamidation of misacylated Glu-tRNA(Gln) in organisms which lack glutaminyl-tRNA synthetase. The reaction takes place in the presence of glutamine and ATP through an activated gamma-phospho-Glu-tRNA(Gln). This Helicobacter hepaticus (strain ATCC 51449 / 3B1) protein is Glutamyl-tRNA(Gln) amidotransferase subunit A.